A 572-amino-acid polypeptide reads, in one-letter code: Potassium-transporting ATPase potassium-binding subunit (572 aa).

11 consecutive transmembrane segments (helical) span residues 5–25, 71–91, 97–117, 142–162, 188–208, 258–278, 292–312, 387–407, 422–442, 500–520, and 548–568; these read LAAG…YVPL, VGYT…LYVL, VLPL…NTAV, GLAV…VALI, ILLP…TIQS, PTPL…VCLT, LTVL…VTWA, GLYG…LLVG, ITMA…GTGI, LGMA…ALAG, and GTVL…GPIA.

This sequence belongs to the KdpA family. The system is composed of three essential subunits: KdpA, KdpB and KdpC.

It is found in the cell membrane. Part of the high-affinity ATP-driven potassium transport (or Kdp) system, which catalyzes the hydrolysis of ATP coupled with the electrogenic transport of potassium into the cytoplasm. This subunit binds the extracellular potassium ions and delivers the ions to the membrane domain of KdpB through an intramembrane tunnel. The protein is Potassium-transporting ATPase potassium-binding subunit of Mycobacteroides abscessus (strain ATCC 19977 / DSM 44196 / CCUG 20993 / CIP 104536 / JCM 13569 / NCTC 13031 / TMC 1543 / L948) (Mycobacterium abscessus).